A 270-amino-acid chain; its full sequence is tRNA (guanine-N(1)-)-methyltransferase (270 aa).

S-adenosyl-L-methionine-binding positions include Gly117 and 137–142 (IGDYVL).

It belongs to the RNA methyltransferase TrmD family. As to quaternary structure, homodimer.

Its subcellular location is the cytoplasm. The enzyme catalyses guanosine(37) in tRNA + S-adenosyl-L-methionine = N(1)-methylguanosine(37) in tRNA + S-adenosyl-L-homocysteine + H(+). Specifically methylates guanosine-37 in various tRNAs. The polypeptide is tRNA (guanine-N(1)-)-methyltransferase (Heliobacterium modesticaldum (strain ATCC 51547 / Ice1)).